The chain runs to 258 residues: Acyl-[acyl-carrier-protein]--UDP-N-acetylglucosamine O-acyltransferase (258 aa).

It belongs to the transferase hexapeptide repeat family. LpxA subfamily. In terms of assembly, homotrimer.

The protein resides in the cytoplasm. The catalysed reaction is a (3R)-hydroxyacyl-[ACP] + UDP-N-acetyl-alpha-D-glucosamine = a UDP-3-O-[(3R)-3-hydroxyacyl]-N-acetyl-alpha-D-glucosamine + holo-[ACP]. It functions in the pathway glycolipid biosynthesis; lipid IV(A) biosynthesis; lipid IV(A) from (3R)-3-hydroxytetradecanoyl-[acyl-carrier-protein] and UDP-N-acetyl-alpha-D-glucosamine: step 1/6. In terms of biological role, involved in the biosynthesis of lipid A, a phosphorylated glycolipid that anchors the lipopolysaccharide to the outer membrane of the cell. This is Acyl-[acyl-carrier-protein]--UDP-N-acetylglucosamine O-acyltransferase from Thermodesulfovibrio yellowstonii (strain ATCC 51303 / DSM 11347 / YP87).